Consider the following 405-residue polypeptide: Phosphatidylinositol 5-phosphate 4-kinase type-2 alpha (405 aa).

In terms of domain architecture, PIPK spans 32–404; the sequence is ASDPLLSVLM…RFLDFIANIL (373 aa). The interval 287–326 is disordered; sequence QEEVECEENDGEDEGESDGTHPIGTPPDSPGNTLNSSLPL. A compositionally biased stretch (acidic residues) spans 288–303; that stretch reads EEVECEENDGEDEGES.

In terms of assembly, homodimer. In terms of processing, phosphorylated in tyrosines. Phosphorylation is induced by light and increases kinase activity.

The protein resides in the cell membrane. It localises to the nucleus. It is found in the lysosome. The protein localises to the cytoplasm. The catalysed reaction is a 1,2-diacyl-sn-glycero-3-phospho-(1D-myo-inositol-5-phosphate) + ATP = a 1,2-diacyl-sn-glycero-3-phospho-(1D-myo-inositol-4,5-bisphosphate) + ADP + H(+). The enzyme catalyses 1,2-dihexadecanoyl-sn-glycero-3-phospho-(1D-myo-inositol-5-phosphate) + ATP = 1,2-dihexadecanoyl-sn-glycero-3-phospho-(1D-myo-inositol-4,5-bisphosphate) + ADP + H(+). It catalyses the reaction 1,2-dihexadecanoyl-sn-glycero-3-phospho-(1D-myo-inositol-5-phosphate) + GTP = 1,2-dihexadecanoyl-sn-glycero-3-phospho-(1D-myo-inositol-4,5-bisphosphate) + GDP + H(+). Its activity is regulated as follows. In rod outer segments, activated by light. Its function is as follows. Catalyzes the phosphorylation of phosphatidylinositol 5-phosphate (PtdIns5P) on the fourth hydroxyl of the myo-inositol ring, to form phosphatidylinositol 4,5-bisphosphate (PtdIns(4,5)P2). Has both ATP- and GTP-dependent kinase activities. The chain is Phosphatidylinositol 5-phosphate 4-kinase type-2 alpha (PIP4K2A) from Gallus gallus (Chicken).